A 179-amino-acid polypeptide reads, in one-letter code: Large ribosomal subunit protein uL5 (179 aa).

Belongs to the universal ribosomal protein uL5 family. As to quaternary structure, part of the 50S ribosomal subunit; part of the 5S rRNA/L5/L18/L25 subcomplex. Contacts the 5S rRNA and the P site tRNA. Forms a bridge to the 30S subunit in the 70S ribosome.

In terms of biological role, this is one of the proteins that bind and probably mediate the attachment of the 5S RNA into the large ribosomal subunit, where it forms part of the central protuberance. In the 70S ribosome it contacts protein S13 of the 30S subunit (bridge B1b), connecting the 2 subunits; this bridge is implicated in subunit movement. Contacts the P site tRNA; the 5S rRNA and some of its associated proteins might help stabilize positioning of ribosome-bound tRNAs. The polypeptide is Large ribosomal subunit protein uL5 (Shewanella oneidensis (strain ATCC 700550 / JCM 31522 / CIP 106686 / LMG 19005 / NCIMB 14063 / MR-1)).